A 177-amino-acid chain; its full sequence is Parathyroid hormone-related protein (177 aa).

An N-terminal signal peptide occupies residues 1–24 (MLRRLVQQWSVAVFLLSYSVPSCG). A propeptide spanning residues 25–34 (RSVEGPGRRL) is cleaved from the precursor. Residues 57–68 (RFFLHHLIAEIH) form an important for receptor binding region. A disordered region spans residues 74–177 (ATSEVSPNSK…PEPELDSRRH (104 aa)). Residues 76–90 (SEVSPNSKPAANTKN) are compositionally biased toward polar residues. A Nuclear localization signal motif is present at residues 108–129 (TNKVEPYKEQPLKTPGKKKKGK). Basic and acidic residues predominate over residues 109–118 (NKVEPYKEQP). The segment covering 122 to 132 (PGKKKKGKPGK) has biased composition (basic residues).

Belongs to the parathyroid hormone family. As to quaternary structure, PTHrP interacts with PTH1R (via N-terminal extracellular domain). In terms of processing, there are several secretory forms, including osteostatin, arising from endoproteolytic cleavage of the initial translation product. Each of these secretory forms is believed to have one or more of its own receptors that mediates the normal paracrine, autocrine and endocrine actions.

The protein resides in the secreted. The protein localises to the cytoplasm. Its subcellular location is the nucleus. Functionally, neuroendocrine peptide which is a critical regulator of cellular and organ growth, development, migration, differentiation and survival and of epithelial calcium ion transport. Acts by binding to its receptor, PTH1R, activating G protein-coupled receptor signaling. Regulates endochondral bone development and epithelial-mesenchymal interactions during the formation of the mammary glands and teeth. Required for skeletal homeostasis. Promotes mammary mesenchyme differentiation and bud outgrowth by modulating mesenchymal cell responsiveness to BMPs. Up-regulates BMPR1A expression in the mammary mesenchyme and this increases the sensitivity of these cells to BMPs and allows them to respond to BMP4 in a paracrine and/or autocrine fashion. BMP4 signaling in the mesenchyme, in turn, triggers epithelial outgrowth and augments MSX2 expression, which causes the mammary mesenchyme to inhibit hair follicle formation within the nipple sheath. Potent inhibitor of osteoclastic bone resorption. The sequence is that of Parathyroid hormone-related protein (PTHLH) from Oryctolagus cuniculus (Rabbit).